A 123-amino-acid chain; its full sequence is Basic phospholipase A2 Ph-TX1 (123 aa).

Ca(2+) contacts are provided by Tyr-27, Gly-29, and Gly-31. Intrachain disulfides connect Cys-28–Cys-45, Cys-44–Cys-96, Cys-50–Cys-123, Cys-51–Cys-89, Cys-59–Cys-83, and Cys-77–Cys-87. His-48 is an active-site residue. Asp-49 is a binding site for Ca(2+). Asp-90 is an active-site residue.

This sequence belongs to the phospholipase A2 family. Group II subfamily. D49 sub-subfamily. In terms of assembly, monomer. Ca(2+) is required as a cofactor. In terms of tissue distribution, expressed by the venom gland.

Its subcellular location is the secreted. The enzyme catalyses a 1,2-diacyl-sn-glycero-3-phosphocholine + H2O = a 1-acyl-sn-glycero-3-phosphocholine + a fatty acid + H(+). Inhibited by divalent cations different from calcium ions (cadmium, magnesium, manganese, zinc), since they act as competitive antagonists of this cofactor. Its function is as follows. Snake venom phospholipase A2 (PLA2) that induces in vivo myotoxicity, moderates footpad edema, and causes in vitro neuromuscular blockade. PLA2 catalyzes the calcium-dependent hydrolysis of the 2-acyl groups in 3-sn-phosphoglycerides. This chain is Basic phospholipase A2 Ph-TX1, found in Bothrocophias hyoprora (Amazonian hognose viper).